The following is a 162-amino-acid chain: Class I hydrophobin dewC (162 aa).

The N-terminal stretch at 1 to 21 (MQFTIASLIATAVLGLQMASA) is a signal peptide. Cystine bridges form between Cys-43–Cys-119, Cys-50–Cys-113, Cys-51–Cys-90, and Cys-120–Cys-156.

The protein belongs to the fungal hydrophobin family. As to quaternary structure, self-assembles to form functional amyloid fibrils called rodlets. Self-assembly into fibrillar rodlets occurs spontaneously at hydrophobic:hydrophilic interfaces and the rodlets further associate laterally to form amphipathic monolayers.

The protein resides in the secreted. It is found in the spore wall. Functionally, aerial growth, conidiation, and dispersal of filamentous fungi in the environment rely upon a capability of their secreting small amphipathic proteins called hydrophobins (HPBs) with low sequence identity. Class I can self-assemble into an outermost layer of rodlet bundles on aerial cell surfaces, conferring cellular hydrophobicity that supports fungal growth, development and dispersal; whereas Class II form highly ordered films at water-air interfaces through intermolecular interactions but contribute nothing to the rodlet structure. DewC is a class I hydrophobin that contributes to the hydrophobicity of the spore surface. In Emericella nidulans (strain FGSC A4 / ATCC 38163 / CBS 112.46 / NRRL 194 / M139) (Aspergillus nidulans), this protein is Class I hydrophobin dewC.